We begin with the raw amino-acid sequence, 418 residues long: Serine hydroxymethyltransferase (418 aa).

(6S)-5,6,7,8-tetrahydrofolate is bound by residues Leu117 and 121–123; that span reads GHL. N6-(pyridoxal phosphate)lysine is present on Lys225.

The protein belongs to the SHMT family. Homodimer. Requires pyridoxal 5'-phosphate as cofactor.

The protein localises to the cytoplasm. It carries out the reaction (6R)-5,10-methylene-5,6,7,8-tetrahydrofolate + glycine + H2O = (6S)-5,6,7,8-tetrahydrofolate + L-serine. It functions in the pathway one-carbon metabolism; tetrahydrofolate interconversion. Its pathway is amino-acid biosynthesis; glycine biosynthesis; glycine from L-serine: step 1/1. In terms of biological role, catalyzes the reversible interconversion of serine and glycine with tetrahydrofolate (THF) serving as the one-carbon carrier. This reaction serves as the major source of one-carbon groups required for the biosynthesis of purines, thymidylate, methionine, and other important biomolecules. Also exhibits THF-independent aldolase activity toward beta-hydroxyamino acids, producing glycine and aldehydes, via a retro-aldol mechanism. The protein is Serine hydroxymethyltransferase of Mycoplasma mobile (strain ATCC 43663 / 163K / NCTC 11711) (Mesomycoplasma mobile).